A 129-amino-acid chain; its full sequence is uncharacterized protein (129 aa).

It belongs to the HesB/IscA family.

This is an uncharacterized protein from Buchnera aphidicola subsp. Schizaphis graminum (strain Sg).